Reading from the N-terminus, the 433-residue chain is Trigger factor (433 aa).

The PPIase FKBP-type domain occupies 163–248; sequence GDTVNIDFSG…VNEIKFKEVP (86 aa).

This sequence belongs to the FKBP-type PPIase family. Tig subfamily.

It is found in the cytoplasm. It carries out the reaction [protein]-peptidylproline (omega=180) = [protein]-peptidylproline (omega=0). In terms of biological role, involved in protein export. Acts as a chaperone by maintaining the newly synthesized protein in an open conformation. Functions as a peptidyl-prolyl cis-trans isomerase. This Staphylococcus aureus (strain COL) protein is Trigger factor.